A 272-amino-acid polypeptide reads, in one-letter code: Ethanolamine ammonia-lyase small subunit (272 aa).

Adenosylcob(III)alamin contacts are provided by Val-161, Glu-182, and Cys-211.

This sequence belongs to the EutC family. The basic unit is a heterodimer which dimerizes to form tetramers. The heterotetramers trimerize; 6 large subunits form a core ring with 6 small subunits projecting outwards. Requires adenosylcob(III)alamin as cofactor.

The protein localises to the bacterial microcompartment. It catalyses the reaction ethanolamine = acetaldehyde + NH4(+). Its pathway is amine and polyamine degradation; ethanolamine degradation. Its function is as follows. Catalyzes the deamination of various vicinal amino-alcohols to oxo compounds. Allows this organism to utilize ethanolamine as the sole source of nitrogen and carbon in the presence of external vitamin B12. The polypeptide is Ethanolamine ammonia-lyase small subunit (Xanthomonas campestris pv. campestris (strain ATCC 33913 / DSM 3586 / NCPPB 528 / LMG 568 / P 25)).